Reading from the N-terminus, the 271-residue chain is MLKIGIIGCGFIGGQICRAIDSGEIDAELYALCDSSESKAFGLAKSLNTCKPAYMKIEELISSVDLVVESASQNAVRFIVPQALKAGCSVMVLSVGALADKELRETLFGLAKKHNCKLYFPSGAVVGIDGINSAHAAGISSVTLTTRKPPSGLMGAPYVVEHGIELEKLEKETILFEGTASEAVKAFPANVNVAATISLAGIGFERTMVRVIADPSLSRNIHEINVEGEFGKFCTKVENLPSPENPKTSYLAALSAISTLKKILNPVQIGT.

Positions 124 and 192 each coordinate NAD(+). Residue H222 is part of the active site.

This sequence belongs to the L-aspartate dehydrogenase family.

It carries out the reaction L-aspartate + NADP(+) + H2O = oxaloacetate + NH4(+) + NADPH + H(+). The catalysed reaction is L-aspartate + NAD(+) + H2O = oxaloacetate + NH4(+) + NADH + H(+). The protein operates within cofactor biosynthesis; NAD(+) biosynthesis; iminoaspartate from L-aspartate (dehydrogenase route): step 1/1. Functionally, specifically catalyzes the NAD or NADP-dependent dehydrogenation of L-aspartate to iminoaspartate. The chain is L-aspartate dehydrogenase from Methanosarcina mazei (strain ATCC BAA-159 / DSM 3647 / Goe1 / Go1 / JCM 11833 / OCM 88) (Methanosarcina frisia).